We begin with the raw amino-acid sequence, 318 residues long: Probable ABC transporter permease protein MG189 (318 aa).

The next 6 membrane-spanning stretches (helical) occupy residues 42–62 (VLGF…VVSF), 98–118 (AIVV…FFTI), 134–154 (LVWF…LIGQ), 169–189 (PLIV…GFMY), 230–250 (VGIL…LLLG), and 282–302 (LKMS…FLFH). The ABC transmembrane type-1 domain occupies 99–301 (IVVNTLVTVL…LPMFIIYFLF (203 aa)).

This sequence belongs to the binding-protein-dependent transport system permease family. MalFG subfamily.

The protein resides in the cell membrane. Functionally, probably part of a binding-protein-dependent transport system. Probably responsible for the translocation of the substrate across the membrane. In Mycoplasma genitalium (strain ATCC 33530 / DSM 19775 / NCTC 10195 / G37) (Mycoplasmoides genitalium), this protein is Probable ABC transporter permease protein MG189.